The primary structure comprises 312 residues: HPr kinase/phosphorylase (312 aa).

Catalysis depends on residues His139 and Lys160. 154-161 contacts ATP; it reads GSSGVGKS. Residue Ser161 coordinates Mg(2+). Asp178 acts as the Proton acceptor; for phosphorylation activity. Proton donor; for dephosphorylation activity in catalysis. The interval 202 to 211 is important for the catalytic mechanism of both phosphorylation and dephosphorylation; it reads LEIRGLGIIN. Glu203 is a binding site for Mg(2+). Arg244 is a catalytic residue. Residues 265–270 form an important for the catalytic mechanism of dephosphorylation region; sequence PVRPGR.

This sequence belongs to the HPrK/P family. In terms of assembly, homohexamer. Mg(2+) is required as a cofactor.

It carries out the reaction [HPr protein]-L-serine + ATP = [HPr protein]-O-phospho-L-serine + ADP + H(+). The enzyme catalyses [HPr protein]-O-phospho-L-serine + phosphate + H(+) = [HPr protein]-L-serine + diphosphate. Its function is as follows. Catalyzes the ATP- as well as the pyrophosphate-dependent phosphorylation of a specific serine residue in HPr, a phosphocarrier protein of the phosphoenolpyruvate-dependent sugar phosphotransferase system (PTS). HprK/P also catalyzes the pyrophosphate-producing, inorganic phosphate-dependent dephosphorylation (phosphorolysis) of seryl-phosphorylated HPr (P-Ser-HPr). The two antagonistic activities of HprK/P are regulated by several intracellular metabolites, which change their concentration in response to the absence or presence of rapidly metabolisable carbon sources (glucose, fructose, etc.) in the growth medium. Therefore, by controlling the phosphorylation state of HPr, HPrK/P is a sensor enzyme that plays a major role in the regulation of carbon metabolism and sugar transport: it mediates carbon catabolite repression (CCR), and regulates PTS-catalyzed carbohydrate uptake and inducer exclusion. The sequence is that of HPr kinase/phosphorylase from Listeria innocua serovar 6a (strain ATCC BAA-680 / CLIP 11262).